A 148-amino-acid polypeptide reads, in one-letter code: Large ribosomal subunit protein bL9 (148 aa).

This sequence belongs to the bacterial ribosomal protein bL9 family.

Its function is as follows. Binds to the 23S rRNA. This chain is Large ribosomal subunit protein bL9, found in Bacillus cereus (strain G9842).